We begin with the raw amino-acid sequence, 218 residues long: MDKSESTSAGRNRRRRPRRGSRSAPSSADANFRVLSQQLSRLNKTLAAGRPTINHPTFVGSERCKPGYTFSSITLKPPKIDRGSYYGKRLLLPDSVTEFDKKLVSRIQIRVNPLPKFDSTVWVTVRKVPASSDLSVAAISAMFADGASPVLVNQYAASGVQANNKLLYDLSAMRADIGDMRKYAVLVYSKDDALETDELVLHVDIEHQRIPTSGVLPV.

Residue methionine 1 is modified to N-acetylmethionine; by host. Residues 1 to 28 (MDKSESTSAGRNRRRRPRRGSRSAPSSA) are disordered. Basic residues predominate over residues 11–21 (RNRRRRPRRGS).

Belongs to the cucumovirus capsid protein family.

It localises to the virion. Capsid protein. Probably binds RNA and plays a role in packaging. The protein is Capsid protein of Cucumis sativus (Cucumber).